The following is a 118-amino-acid chain: Class I hydrophobin 1 (118 aa).

The N-terminal stretch at 1–20 (MFARLSTALLAFTLATAVVA) is a signal peptide. Intrachain disulfides connect C34–C97, C41–C91, C42–C77, and C98–C111. N-linked (GlcNAc...) asparagine glycosylation is present at N54. N115 carries an N-linked (GlcNAc...) asparagine glycan.

Belongs to the fungal hydrophobin family. Self-assembles to form functional amyloid fibrils called rodlets. Self-assembly into fibrillar rodlets occurs spontaneously at hydrophobic:hydrophilic interfaces and the rodlets further associate laterally to form amphipathic monolayers.

The protein localises to the secreted. It localises to the cell wall. Functionally, aerial growth, conidiation, and dispersal of filamentous fungi in the environment rely upon a capability of their secreting small amphipathic proteins called hydrophobins (HPBs) with low sequence identity. Class I can self-assemble into an outermost layer of rodlet bundles on aerial cell surfaces, conferring cellular hydrophobicity that supports fungal growth, development and dispersal; whereas Class II form highly ordered films at water-air interfaces through intermolecular interactions but contribute nothing to the rodlet structure. The polypeptide is Class I hydrophobin 1 (Coprinopsis cinerea (strain Okayama-7 / 130 / ATCC MYA-4618 / FGSC 9003) (Inky cap fungus)).